Consider the following 197-residue polypeptide: HTH-type transcriptional regulator BetI (197 aa).

An HTH tetR-type domain is found at 8 to 68; sequence PIRRSQLIHA…ATMRHLLSAL (61 aa). Residues 31–50 constitute a DNA-binding region (H-T-H motif); that stretch reads SIALIARLAGVSNGIISHYF.

It participates in amine and polyamine biosynthesis; betaine biosynthesis via choline pathway [regulation]. In terms of biological role, repressor involved in the biosynthesis of the osmoprotectant glycine betaine. It represses transcription of the choline transporter BetT and the genes of BetAB involved in the synthesis of glycine betaine. The polypeptide is HTH-type transcriptional regulator BetI (Pseudomonas aeruginosa (strain LESB58)).